Consider the following 226-residue polypeptide: X-linked lymphocyte-regulated protein 3C (226 aa).

The disordered stretch occupies residues 1–66 (MSSRKRKATD…QARKEKQDLV (66 aa)). The segment covering 8–18 (ATDTAGRHSRM) has biased composition (basic and acidic residues). Residues 21–30 (NLSSDDSQNP) show a composition bias toward polar residues. 2 stretches are compositionally biased toward basic and acidic residues: residues 39–48 (EVLDAGREDI) and 56–66 (QQARKEKQDLV). A coiled-coil region spans residues 155-210 (ESLTLQKNRMEEFKSLCEKYLEKLEVLRDSRGNSIAEELRRLIATLEIKLLMLHNQ).

This sequence belongs to the XLR/SYCP3 family. In terms of tissue distribution, expressed in lymphoid cells.

This Mus musculus (Mouse) protein is X-linked lymphocyte-regulated protein 3C (Xlr3c).